The chain runs to 538 residues: Cytochrome P450 monooxygenase claM (538 aa).

The helical transmembrane segment at Leu-36–Leu-56 threads the bilayer. N-linked (GlcNAc...) asparagine glycans are attached at residues Asn-306 and Asn-425. A heme-binding site is contributed by Cys-472.

This sequence belongs to the cytochrome P450 family. The cofactor is heme.

The protein resides in the membrane. It catalyses the reaction 2 nataloe emodin + reduced [NADPH--hemoprotein reductase] + O2 = cladofulvin + oxidized [NADPH--hemoprotein reductase] + 2 H2O + H(+). It participates in pigment biosynthesis. Its function is as follows. Cytochrome P450 monooxygenase; part of the gene cluster that mediates the biosynthesis of the bianthraquinone cladofulvin, a conidial pigment not required for virulence but that plays a role in fitness and resistance to environmental stresses including UV light and low-temperature stress. The pathway begins with the synthesis of atrochrysone thioester by the polyketide synthase (PKS) claG. The atrochrysone carboxyl ACP thioesterase claF then breaks the thioester bond and releases the atrochrysone carboxylic acid from claG. This compound is decarboxylated by claH to yield emodin, which is further converted to chrysophanol hydroquinone by the reductase claC and the dehydratase claB. The cytochrome monooxygenase P450 claM then catalyzes the dimerization of nataloe-emodin to cladofulvin. This chain is Cytochrome P450 monooxygenase claM, found in Passalora fulva (Tomato leaf mold).